The chain runs to 465 residues: Polyadenylation factor subunit 2 (465 aa).

The segment covering 1–20 (MDGHNQNQYQNQNQIQQSQQ) has biased composition (low complexity). The tract at residues 1–26 (MDGHNQNQYQNQNQIQQSQQPPLKKY) is disordered. WD repeat units follow at residues 133–163 (AHDSAVTTMKYSHDSDWMISGDADGMIKIWQ), 175–205 (AHTESIRDMAFSSNDSKFVTCSDDNILKIWN), 217–247 (GHHWDVKSCDWHPEMGLIASASKDNLVKLWD), 259–290 (KFKHTVLKTRFQPTKGNLLMAISKDKSCRVFD), and 348–378 (AHDKCITSLSYNPVGHIFATAAKDRTIRFWT). Positions 417 to 465 (EFGAAPPPPATLEPHALPNMNGFINKKPRQEIPGIDSNIKSSTLPGLSI) are disordered. Over residues 454–465 (NIKSSTLPGLSI) the composition is skewed to polar residues.

As to quaternary structure, component of the cleavage and polyadenylation factor (CPF) complex, which is composed of at least PTI1, SYC1, SSU72, GLC7, MPE1, REF2, PFS2, PTA1, YSH1/BRR5, SWD2, CFT2/YDH1, YTH1, CFT1/YHH1, FIP1 and PAP1. Interacts with YSH1/BRR5, FIP1 and RNA14.

It localises to the nucleus. Its function is as follows. Integral and essential component of the cleavage and polyadenylation factor (CPF) complex, which plays a key role in polyadenylation-dependent pre-mRNA 3'-end formation and cooperates with cleavage factors including the CFIA complex and NAB4/CFIB. May bridge the CPF and CFIA complexes. In Saccharomyces cerevisiae (strain ATCC 204508 / S288c) (Baker's yeast), this protein is Polyadenylation factor subunit 2 (PFS2).